We begin with the raw amino-acid sequence, 452 residues long: Glycine receptor subunit alpha-2 (452 aa).

A signal peptide spans 1–27; it reads MYRQLVNILTALFAFFLGTNHFREAFC. Over 28–256 the chain is Extracellular; that stretch reads KDHDSRSGKH…KFHLERQMGY (229 aa). N-linked (GlcNAc...) asparagine glycosylation occurs at Asn72. Arg99 is a binding site for glycine. Arg99 contributes to the strychnine binding site. Asn103 is a glycosylation site (N-linked (GlcNAc...) asparagine). A glycine-binding site is contributed by Ser163. Cys172 and Cys186 form a disulfide bridge. Residues Glu226 and Glu228 each coordinate Zn(2+). Cys232 and Cys243 are joined by a disulfide. Thr238 contributes to the glycine binding site. His249 is a binding site for Zn(2+). The chain crosses the membrane as a helical span at residues 257–278; the sequence is YLIQMYIPSLLIVILSWVSFWI. The Cytoplasmic portion of the chain corresponds to 279–283; the sequence is NMDAA. A helical membrane pass occupies residues 284–304; it reads PARVALGITTVLTMTTQSSGS. The Extracellular portion of the chain corresponds to 305–315; that stretch reads RASLPKVSYVK. Residues 316–336 form a helical membrane-spanning segment; it reads AIDIWMAVCLLFVFAALLEYA. Residues 337 to 420 are Cytoplasmic-facing; it reads AVNFVSRQHK…FVDRAKRIDT (84 aa). Residues 421-441 traverse the membrane as a helical segment; sequence ISRAAFPLAFLIFNIFYWITY. The Extracellular portion of the chain corresponds to 442-452; it reads KIIRHEDVHKK.

The protein belongs to the ligand-gated ion channel (TC 1.A.9) family. Glycine receptor (TC 1.A.9.3) subfamily. GLRA2 sub-subfamily. As to quaternary structure, interacts with GLRB. Heteropentamer composed of GLRA2 and GLRB; functional GLRB-GLRA2 heteropentamers contain four GLRA2 subunits and one GLRB subunit, although alternative subunit composition cannot be excluded. Homopentamer (in vitro). Both homopentamers and heteropentamers form functional ion channels, but their characteristics are subtly different. Detected in the retina inner plexiform layer (at protein level). Detected in neonate retina. Detected in brain. Detected in spinal cord, with higher levels in the dorsal horn.

It localises to the postsynaptic cell membrane. It is found in the synapse. The protein resides in the cell membrane. Its subcellular location is the cell projection. It carries out the reaction chloride(in) = chloride(out). With respect to regulation, channel opening is triggered by extracellular glycine. Channel opening is also triggered by taurine and beta-alanine. Inhibited by strychnine. Inhibited by picrotoxin. In terms of biological role, subunit of heteromeric glycine-gated chloride channels. Plays a role in synaptic plasticity. Contributes to the generation of inhibitory postsynaptic currents, and is involved in the down-regulation of neuronal excitability. Plays a role in cellular responses to ethanol. In Mus musculus (Mouse), this protein is Glycine receptor subunit alpha-2.